Consider the following 97-residue polypeptide: Large ribosomal subunit protein eL21 (97 aa).

It belongs to the eukaryotic ribosomal protein eL21 family.

The protein is Large ribosomal subunit protein eL21 of Methanococcus vannielii (strain ATCC 35089 / DSM 1224 / JCM 13029 / OCM 148 / SB).